A 289-amino-acid polypeptide reads, in one-letter code: ATP synthase gamma chain (289 aa).

Belongs to the ATPase gamma chain family. F-type ATPases have 2 components, CF(1) - the catalytic core - and CF(0) - the membrane proton channel. CF(1) has five subunits: alpha(3), beta(3), gamma(1), delta(1), epsilon(1). CF(0) has three main subunits: a, b and c.

Its subcellular location is the cell inner membrane. Functionally, produces ATP from ADP in the presence of a proton gradient across the membrane. The gamma chain is believed to be important in regulating ATPase activity and the flow of protons through the CF(0) complex. The chain is ATP synthase gamma chain from Coxiella burnetii (strain CbuK_Q154) (Coxiella burnetii (strain Q154)).